The following is a 168-amino-acid chain: Glycine-rich RNA-binding protein 2 (168 aa).

The RRM domain maps to 8–86 (YRCFVGGLAW…RNITVNQAQS (79 aa)). Residues 148–168 (GYGGGGGYGGNRGDSGGNWRN) are disordered.

In terms of biological role, possibly has a role in RNA transcription or processing during stress. This Sorghum bicolor (Sorghum) protein is Glycine-rich RNA-binding protein 2 (GRP2).